A 514-amino-acid chain; its full sequence is 2-isopropylmalate synthase (514 aa).

The region spanning 5–267 is the Pyruvate carboxyltransferase domain; it reads LIIFDTTLRD…HTDIETREIV (263 aa). Mn(2+) contacts are provided by Asp-14, His-202, His-204, and Asn-238. The tract at residues 393-514 is regulatory domain; the sequence is KLVALRVCSE…QRTHPQVGDV (122 aa).

It belongs to the alpha-IPM synthase/homocitrate synthase family. LeuA type 1 subfamily. As to quaternary structure, homodimer. The cofactor is Mn(2+).

Its subcellular location is the cytoplasm. It carries out the reaction 3-methyl-2-oxobutanoate + acetyl-CoA + H2O = (2S)-2-isopropylmalate + CoA + H(+). Its pathway is amino-acid biosynthesis; L-leucine biosynthesis; L-leucine from 3-methyl-2-oxobutanoate: step 1/4. Its function is as follows. Catalyzes the condensation of the acetyl group of acetyl-CoA with 3-methyl-2-oxobutanoate (2-ketoisovalerate) to form 3-carboxy-3-hydroxy-4-methylpentanoate (2-isopropylmalate). The protein is 2-isopropylmalate synthase of Methylococcus capsulatus (strain ATCC 33009 / NCIMB 11132 / Bath).